A 503-amino-acid polypeptide reads, in one-letter code: AMP phosphorylase (503 aa).

AMP is bound by residues G168, 194–199 (SRAITS), and T203. D256 serves as the catalytic Proton donor. Residues S264 and K288 each coordinate AMP.

This sequence belongs to the thymidine/pyrimidine-nucleoside phosphorylase family. Type 2 subfamily.

The catalysed reaction is AMP + phosphate = alpha-D-ribose 1,5-bisphosphate + adenine. It catalyses the reaction CMP + phosphate = cytosine + alpha-D-ribose 1,5-bisphosphate. The enzyme catalyses UMP + phosphate = alpha-D-ribose 1,5-bisphosphate + uracil. Functionally, catalyzes the conversion of AMP and phosphate to adenine and ribose 1,5-bisphosphate (R15P). Exhibits phosphorylase activity toward CMP and UMP in addition to AMP. Functions in an archaeal AMP degradation pathway, together with R15P isomerase and RubisCO. This Pyrococcus furiosus (strain ATCC 43587 / DSM 3638 / JCM 8422 / Vc1) protein is AMP phosphorylase.